Here is a 1414-residue protein sequence, read N- to C-terminus: Alpha-(1-&gt;3)-arabinofuranosyltransferase (1414 aa).

Helical transmembrane passes span 57-77, 81-101, 128-148, 167-187, 203-223, 273-293, 302-322, 352-372, and 389-409; these read YLFP…PGWV, LWWA…AEAL, AISS…PVIL, VALM…AAVI, AWWL…LLML, STTA…GLAL, LITM…GGLG, LPLA…GSAP, and VAVA…AWTA. One can recognise an F5/8 type C domain in the interval 687–845; that stretch reads YPSDGADLVY…QYDASGFAHP (159 aa). Helical transmembrane passes span 1253–1273, 1297–1317, 1333–1353, and 1364–1384; these read VGLI…LIPV, ALVA…GAAM, VWDN…GSVL, and YVGH…FLAA. The tract at residues 1393-1414 is disordered; sequence PEPSEDGRSAKPEHTGASAHAG. Residues 1394–1406 show a composition bias toward basic and acidic residues; the sequence is EPSEDGRSAKPEH.

The protein resides in the membrane. The enzyme catalyses Adds an alpha-D-arabinofuranosyl group from trans,octacis-decaprenylphospho-beta-D-arabinofuranose at the 3-O-position of an alpha-(1-&gt;5)-arabinofuranan chain attached to a beta-(1-&gt;5)-galactofuranan chain.. It functions in the pathway cell wall biogenesis; cell wall polysaccharide biosynthesis. Involved in the biosynthesis of the arabinogalactan (AG) region of the mycolylarabinogalactan-peptidoglycan (mAGP) complex, an essential component of the mycobacterial cell wall. Catalyzes the addition of an arabinofuranosyl (Araf) residue from the sugar donor decaprenyl-phospho-arabinose (DPA) on the C-3 of an alpha-(1-&gt;5)-linked Araf from the arabinan backbone of AG. This Mycolicibacterium smegmatis (strain ATCC 700084 / mc(2)155) (Mycobacterium smegmatis) protein is Alpha-(1-&gt;3)-arabinofuranosyltransferase (aftD).